Here is a 373-residue protein sequence, read N- to C-terminus: UDP-N-acetylglucosamine--N-acetylmuramyl-(pentapeptide) pyrophosphoryl-undecaprenol N-acetylglucosamine transferase (373 aa).

UDP-N-acetyl-alpha-D-glucosamine is bound by residues 10–12 (TGG), Asn-124, Ser-195, and Gln-297.

It belongs to the glycosyltransferase 28 family. MurG subfamily.

It localises to the cell membrane. It carries out the reaction Mur2Ac(oyl-L-Ala-gamma-D-Glu-L-Lys-D-Ala-D-Ala)-di-trans,octa-cis-undecaprenyl diphosphate + UDP-N-acetyl-alpha-D-glucosamine = beta-D-GlcNAc-(1-&gt;4)-Mur2Ac(oyl-L-Ala-gamma-D-Glu-L-Lys-D-Ala-D-Ala)-di-trans,octa-cis-undecaprenyl diphosphate + UDP + H(+). It participates in cell wall biogenesis; peptidoglycan biosynthesis. Cell wall formation. Catalyzes the transfer of a GlcNAc subunit on undecaprenyl-pyrophosphoryl-MurNAc-pentapeptide (lipid intermediate I) to form undecaprenyl-pyrophosphoryl-MurNAc-(pentapeptide)GlcNAc (lipid intermediate II). The protein is UDP-N-acetylglucosamine--N-acetylmuramyl-(pentapeptide) pyrophosphoryl-undecaprenol N-acetylglucosamine transferase of Oenococcus oeni (strain ATCC BAA-331 / PSU-1).